Reading from the N-terminus, the 359-residue chain is Protein PAM71-homolog, chloroplastic (359 aa).

The transit peptide at 1–66 directs the protein to the chloroplast; sequence MKLTSLSKNA…DLLWGKFRVR (66 aa). Positions 71 to 102 are disordered; the sequence is GVGSGSYSGGEEDGSQSSSLDQSPATSSESLK. Positions 85–98 are enriched in low complexity; it reads SQSSSLDQSPATSS. The next 7 membrane-spanning stretches (helical) occupy residues 110–130, 149–169, 177–197, 207–227, 269–289, 311–331, and 339–359; these read SLSIALVLLSCGLVFSLITFV, AFSLIFVSEIGDKTFFIAALL, LVLLGSMGALSLMTILSVVIG, FQTTLPIGEYAAIALLMFFGL, LTNPLEILWKSFSLVFFAEWG, GAIAGHLVATVLAIMGGAFLA, and VGYVGGALFLVFAAATFFGVF.

The protein belongs to the GDT1 family.

The protein localises to the plastid. It localises to the chloroplast membrane. Functionally, probable chloroplast-localized Mn(2+)/H(+) and/or Ca(2+)/H(+) antiporter regulating Ca(2+), Mn(2+) and pH homeostasis. In Arabidopsis thaliana (Mouse-ear cress), this protein is Protein PAM71-homolog, chloroplastic.